The sequence spans 455 residues: Probable transcription factor GLK1 (455 aa).

The span at 145 to 163 shows a compositional bias: low complexity; the sequence is AAVEAKSSSPSSTTSSSQE. The disordered stretch occupies residues 145–183; the sequence is AAVEAKSSSPSSTTSSSQEAESRHKSSSKSSHGKKKAKV. The segment covering 169–181 has biased composition (basic residues); sequence KSSSKSSHGKKKA. The HTH myb-type domain maps to 177-236; it reads GKKKAKVDWTPELHRRFVQAVEQLGIDKAVPSRILEIMGIDSLTRHNIASHLQKYRSHRK. The segment at residues 207-232 is a DNA-binding region (H-T-H motif); the sequence is PSRILEIMGIDSLTRHNIASHLQKYR.

Expressed in leaves.

The protein resides in the nucleus. Probable transcriptional activator that promotes chloroplast development. Acts as an activator of nuclear photosynthetic genes involved in chlorophyll biosynthesis, light harvesting, and electron transport. The sequence is that of Probable transcription factor GLK1 (GLK1) from Oryza sativa subsp. japonica (Rice).